Here is a 117-residue protein sequence, read N- to C-terminus: NADH-ubiquinone oxidoreductase chain 3 (117 aa).

The next 3 helical transmembrane spans lie at 5–25 (ALSS…AWVL), 57–77 (FFLL…LMPL), and 86–106 (VFTT…GLIH).

It belongs to the complex I subunit 3 family.

It localises to the mitochondrion membrane. It catalyses the reaction a ubiquinone + NADH + 5 H(+)(in) = a ubiquinol + NAD(+) + 4 H(+)(out). In terms of biological role, core subunit of the mitochondrial membrane respiratory chain NADH dehydrogenase (Complex I) that is believed to belong to the minimal assembly required for catalysis. Complex I functions in the transfer of electrons from NADH to the respiratory chain. The immediate electron acceptor for the enzyme is believed to be ubiquinone. This chain is NADH-ubiquinone oxidoreductase chain 3 (ND3), found in Lumbricus terrestris (Common earthworm).